A 441-amino-acid polypeptide reads, in one-letter code: tRNA-2-methylthio-N(6)-dimethylallyladenosine synthase (441 aa).

Residues 5–121 (KKLFIKTYGC…LPQMEARLRE (117 aa)) enclose the MTTase N-terminal domain. 6 residues coordinate [4Fe-4S] cluster: C14, C50, C84, C159, C163, and C166. The 236-residue stretch at 145 to 380 (ARRAPSAFLT…TRQQQDIQQS (236 aa)) folds into the Radical SAM core domain. In terms of domain architecture, TRAM spans 379–441 (QSMVGRDVSV…RNSLAAVTLA (63 aa)).

Belongs to the methylthiotransferase family. MiaB subfamily. As to quaternary structure, monomer. Requires [4Fe-4S] cluster as cofactor.

The protein localises to the cytoplasm. The catalysed reaction is N(6)-dimethylallyladenosine(37) in tRNA + (sulfur carrier)-SH + AH2 + 2 S-adenosyl-L-methionine = 2-methylsulfanyl-N(6)-dimethylallyladenosine(37) in tRNA + (sulfur carrier)-H + 5'-deoxyadenosine + L-methionine + A + S-adenosyl-L-homocysteine + 2 H(+). Catalyzes the methylthiolation of N6-(dimethylallyl)adenosine (i(6)A), leading to the formation of 2-methylthio-N6-(dimethylallyl)adenosine (ms(2)i(6)A) at position 37 in tRNAs that read codons beginning with uridine. The polypeptide is tRNA-2-methylthio-N(6)-dimethylallyladenosine synthase (Roseobacter denitrificans (strain ATCC 33942 / OCh 114) (Erythrobacter sp. (strain OCh 114))).